A 331-amino-acid polypeptide reads, in one-letter code: Peroxidase 60 (331 aa).

Residues 1-26 (MAVKISTIEVLILSLALLSFGHGCYG) form the signal peptide. 4 disulfides stabilise this stretch: cysteine 37-cysteine 113, cysteine 70-cysteine 75, cysteine 119-cysteine 321, and cysteine 198-cysteine 230. Histidine 68 functions as the Proton acceptor in the catalytic mechanism. The Ca(2+) site is built by aspartate 69, glycine 74, aspartate 76, and serine 78. Position 161 (proline 161) interacts with substrate. Residue histidine 191 coordinates heme b. Threonine 192 contacts Ca(2+). A glycan (N-linked (GlcNAc...) asparagine) is linked at asparagine 245. Positions 248 and 253 each coordinate Ca(2+).

It belongs to the peroxidase family. Classical plant (class III) peroxidase subfamily. Heme b is required as a cofactor. Requires Ca(2+) as cofactor. Expressed in roots, slightly in leaves.

The protein localises to the secreted. The enzyme catalyses 2 a phenolic donor + H2O2 = 2 a phenolic radical donor + 2 H2O. Its function is as follows. Removal of H(2)O(2), oxidation of toxic reductants, biosynthesis and degradation of lignin, suberization, auxin catabolism, response to environmental stresses such as wounding, pathogen attack and oxidative stress. These functions might be dependent on each isozyme/isoform in each plant tissue. The polypeptide is Peroxidase 60 (PER60) (Arabidopsis thaliana (Mouse-ear cress)).